The sequence spans 340 residues: Dihydroorotate dehydrogenase (quinone) (340 aa).

Residues 63 to 67 (AGLDK) and Thr-87 each bind FMN. Lys-67 contributes to the substrate binding site. 112 to 116 (NRMGF) contacts substrate. Positions 140 and 173 each coordinate FMN. Asn-173 lines the substrate pocket. The Nucleophile role is filled by Ser-176. Substrate is bound at residue Asn-178. 2 residues coordinate FMN: Lys-218 and Thr-246. 247–248 (NT) provides a ligand contact to substrate. FMN-binding positions include Gly-269, Gly-298, and 319–320 (YT).

Belongs to the dihydroorotate dehydrogenase family. Type 2 subfamily. In terms of assembly, monomer. The cofactor is FMN.

The protein localises to the cell membrane. The catalysed reaction is (S)-dihydroorotate + a quinone = orotate + a quinol. It participates in pyrimidine metabolism; UMP biosynthesis via de novo pathway; orotate from (S)-dihydroorotate (quinone route): step 1/1. In terms of biological role, catalyzes the conversion of dihydroorotate to orotate with quinone as electron acceptor. The chain is Dihydroorotate dehydrogenase (quinone) from Methylococcus capsulatus (strain ATCC 33009 / NCIMB 11132 / Bath).